Reading from the N-terminus, the 459-residue chain is Vanillin aminotransferase (459 aa).

Pyridoxal 5'-phosphate contacts are provided by residues 115–116 (GS) and Asp255. N6-(pyridoxal phosphate)lysine is present on Lys284. 320 to 321 (FT) is a pyridoxal 5'-phosphate binding site. A coiled-coil region spans residues 428-459 (LSLEELDELIRIYGKALKDTEKRVEELKSQKK).

It belongs to the class-III pyridoxal-phosphate-dependent aminotransferase family. Expressed in placental tissue of immature fruit.

It catalyses the reaction vanillin + L-alanine = vanillylamine + pyruvate. It functions in the pathway aromatic compound metabolism; phenylpropanoid biosynthesis. Involved in the biosynthesis of capsaicinoids natural products, pungent alkaloids synthesized from phenylpropanoid intermediates in the placental tissue of chili pepper fruit acting as repellant on herbivorous mammals and conferring spiciness to hot peppers. Can transfer an amine from vanillylamine to pyruvate forming vanillin and L-alanine. Can use pyruvate or oxaloacetate, but not 2-oxoglutarate as amino group acceptors. Is able to convert (S)-1-phenylethylamine into acetophenone in vitro. This Capsicum chinense (Scotch bonnet) protein is Vanillin aminotransferase.